A 244-amino-acid polypeptide reads, in one-letter code: Octanoyltransferase (244 aa).

The segment at 1–21 is disordered; that stretch reads MDKKLHSVSPESGPNSNLDLT. The segment covering 9-21 has biased composition (polar residues); that stretch reads SPESGPNSNLDLT. A BPL/LPL catalytic domain is found at 59–244; sequence PFSPQAVWLL…LNWEKINQSL (186 aa). Residues 101-108, 168-170, and 181-183 contribute to the substrate site; these read RGGEVTHH, SIG, and GFS. The active-site Acyl-thioester intermediate is cysteine 199.

Belongs to the LipB family.

The protein resides in the cytoplasm. It carries out the reaction octanoyl-[ACP] + L-lysyl-[protein] = N(6)-octanoyl-L-lysyl-[protein] + holo-[ACP] + H(+). It participates in protein modification; protein lipoylation via endogenous pathway; protein N(6)-(lipoyl)lysine from octanoyl-[acyl-carrier-protein]: step 1/2. Catalyzes the transfer of endogenously produced octanoic acid from octanoyl-acyl-carrier-protein onto the lipoyl domains of lipoate-dependent enzymes. Lipoyl-ACP can also act as a substrate although octanoyl-ACP is likely to be the physiological substrate. This Prochlorococcus marinus (strain NATL1A) protein is Octanoyltransferase.